Reading from the N-terminus, the 234-residue chain is Sperm flagellar protein 1 (234 aa).

Residues 7–112 (EEALHQLYLW…VLIPLRQRLE (106 aa)) enclose the Calponin-homology (CH) domain. An essential for homodimerization and microtubule bundling activity region spans residues 181-234 (VLQIAEKEQELLASQETVQVLQMKVKRLEHLLQLKNVRIDDLSRRLQQAERKQR).

As to quaternary structure, homodimer. Interacts with actin, TJP1, CGN and CDH1. Expressed predominantly in the seminiferous epithelium of adult testis. Expressed in pillar cells of the organ of Corti (at protein level). Expressed in brain, kidney, lung and testis. Highly expressed in the trachea, lung and oviduct.

The protein resides in the cytoplasm. The protein localises to the cell projection. It localises to the cilium. Its subcellular location is the flagellum. It is found in the cytoskeleton. The protein resides in the cilium axoneme. The protein localises to the apical cell membrane. It localises to the basolateral cell membrane. Its subcellular location is the stress fiber. It is found in the microvillus. The protein resides in the lamellipodium. The protein localises to the filopodium. Functionally, microtubule-associated protein that promotes microtubule bundling and stabilizes microtubules against depolymerization in response to cold shock. Microtubule-associated protein involved in the stabilization of microtubules along the axis of migration during radial intercalation. Promotes the establishment and stabilization of an axis of microtubules required for the active migration of cells into the outer epithelium. Essential for ciliary central apparatus formation which requires both its microtubule-binding and bundling activities and for ciliary localization of HYDIN and SPAG6 in ependymal cilia. Binds actin in intestinal epithelial cells (IECs), essential for IECs survival and contributes to formation of filopodia and lamellipodia in migrating IECs. Regulates planar cell polarity signaling pathway and asymmetric microtubule accumulation in ciliated epithelia. The polypeptide is Sperm flagellar protein 1 (Spef1) (Mus musculus (Mouse)).